The chain runs to 215 residues: Cytochrome b6 (215 aa).

The chain crosses the membrane as a helical span at residues 32–52; sequence IFYCLGGITLTCFLVQVATGF. Cys-35 is a binding site for heme c. Positions 86 and 100 each coordinate heme b. The next 3 helical transmembrane spans lie at 90–110, 116–136, and 186–206; these read ASMM…TGGF, LTWV…VTGY, and LHTF…FLMI. Heme b is bound by residues His-187 and His-202.

It belongs to the cytochrome b family. PetB subfamily. In terms of assembly, the 4 large subunits of the cytochrome b6-f complex are cytochrome b6, subunit IV (17 kDa polypeptide, PetD), cytochrome f and the Rieske protein, while the 4 small subunits are PetG, PetL, PetM and PetN. The complex functions as a dimer. Requires heme b as cofactor. The cofactor is heme c.

The protein localises to the plastid. The protein resides in the chloroplast thylakoid membrane. Its function is as follows. Component of the cytochrome b6-f complex, which mediates electron transfer between photosystem II (PSII) and photosystem I (PSI), cyclic electron flow around PSI, and state transitions. The protein is Cytochrome b6 of Gossypium barbadense (Sea Island cotton).